Here is a 1216-residue protein sequence, read N- to C-terminus: Metabotropic glycine receptor (1216 aa).

The signal sequence occupies residues 1–23 (MGVMAYPFLFCLLLVHFGLGAIG). Residues 24–417 (ASREAPSRPD…CFVQEDKYLR (394 aa)) are Extracellular-facing. The segment at 25–65 (SREAPSRPDPPRERTLRAKQHAQQPARASASDPSAPWSRST) is disordered. Basic and acidic residues predominate over residues 28-40 (APSRPDPPRERTL). Over residues 46-64 (AQQPARASASDPSAPWSRS) the composition is skewed to low complexity. The cache-like region stretch occupies residues 85-281 (YLYTGDSHKL…CENGSYKPGW (197 aa)). Asparagine 98 and asparagine 143 each carry an N-linked (GlcNAc...) asparagine glycan. Cysteine 99 and cysteine 272 form a disulfide bridge. Glycine-binding residues include serine 172 and arginine 173. Residue asparagine 215 is glycosylated (N-linked (GlcNAc...) asparagine). Glutamate 271 is a binding site for glycine. Residue asparagine 274 is glycosylated (N-linked (GlcNAc...) asparagine). Aspartate 307 is a glycine binding site. Asparagine 333 carries N-linked (GlcNAc...) asparagine glycosylation. Residues 418–439 (LAIISFQALCMLLDFLSMLVVY) form a helical membrane-spanning segment. Over 440–451 (RFRKAKSIRASG) the chain is Cytoplasmic. The chain crosses the membrane as a helical span at residues 452-474 (LILLETILFGSLLLYFPVVILYF). Topologically, residues 475–478 (EPST) are extracellular. A helical transmembrane segment spans residues 479–501 (FRCILLRWVRLLGFATVYGTVTL). The cysteines at positions 481 and 573 are disulfide-linked. At 502 to 525 (KLHRVLKVFLSRTAQRIPYMTGGR) the chain is on the cytoplasmic side. A helical transmembrane segment spans residues 526–547 (VMRMLAVILLVVFWFLVGWTSS). Residues 548–576 (VCQNLERHISLIGQGRTSDHLIFSMCLVE) are Extracellular-facing. Residues 577–597 (RWDYMTAAAEFLFLLWGVYLC) form a helical membrane-spanning segment. The Cytoplasmic portion of the chain corresponds to 598-611 (YAVRTVPSAFHEPR). A helical transmembrane segment spans residues 612–633 (YMAVAVHNELIISAIFHTIRFV). The Extracellular segment spans residues 634–642 (LASRLQSDW). A helical transmembrane segment spans residues 643–664 (MLMLYFAHTHLTVTVTIGLLLI). Residues 665–1216 (PKFSHSSNNP…NEEVRLARKV (552 aa)) lie on the Cytoplasmic side of the membrane. 3 positions are modified to phosphoserine: serine 694, serine 705, and serine 708. 2 disordered regions span residues 757-875 (RITE…ESVP) and 911-1000 (KEKT…HMKD). Basic and acidic residues predominate over residues 769-781 (CSKEDKDGGEHGS). Lysine 774 participates in a covalent cross-link: Glycyl lysine isopeptide (Lys-Gly) (interchain with G-Cter in ubiquitin). The span at 864 to 873 (EDSQAVSTES) shows a compositional bias: polar residues. Position 866 is a phosphoserine (serine 866). Residues 926–944 (VEERAKAQKALPRERETNR) show a composition bias toward basic and acidic residues. Polar residues-rich tracts occupy residues 945–963 (KYSN…PNSS) and 980–991 (QRANPTTANSDL). The residue at position 947 (serine 947) is a Phosphoserine. The VCPWE motif 1 motif lies at 1007–1011 (VCPWE). The segment at 1038-1072 (ERNPTFSLKEKSHPKPKAADLCQQSNPKSVDKAEV) is disordered. The residue at position 1066 (serine 1066) is a Phosphoserine. The short motif at 1072–1076 (VCPWE) is the VCPWE motif 2 element. Serine 1081 carries the post-translational modification Phosphoserine. Residues 1128–1167 (SKVENENLNQLGEQEKKTSSSERNVPDSHNSSNNFQPPLM) are disordered. Basic and acidic residues predominate over residues 1140–1153 (EQEKKTSSSERNVP). Residues 1154–1163 (DSHNSSNNFQ) show a composition bias toward polar residues. The short motif at 1172–1176 (VCPWE) is the VCPWE motif 3 element.

This sequence belongs to the G-protein coupled receptor 3 family. In terms of assembly, homodimer. Associates with the RGS7-GNB5 complex, promoting its localization to the cell membrane and regulating its GTPase activator activity. Interacts (via VCPWE motifs) with GNAO1. Interacts with GPC4. Interacts with EGFLAM.

Its subcellular location is the cell membrane. The protein localises to the postsynaptic cell membrane. It localises to the presynaptic cell membrane. It is found in the nucleus. In terms of biological role, metabotropic receptor for glycine that controls synapse formation and function in the brain. Acts as an atypical G-protein coupled receptor that recruits and regulates the RGS7-GNB5 complex instead of activating G proteins. In absence of glycine ligand, promotes the GTPase activator activity of RGS7, increasing the GTPase activity of G protein alpha subunits, thereby driving them into their inactive GDP-bound form. Glycine-binding changes the conformation of the intracellular surface, inhibiting the GTPase activator activity of the RGS7-GNB5 complex, promoting G protein alpha subunits into their active GTP-bound form and regulating cAMP levels. Also able to bind taurine, a compound closely related to glycine, but with a two-fold lower affinity. Glycine receptor-dependent regulation of cAMP controls key ion channels, kinases and neurotrophic factors involved in neuronal excitability and synaptic transmission. Plays a pivotal role in regulating mood and cognition via its ability to regulate neuronal excitability in L2/L3 pyramidal neurons of the prefrontal cortex. Also involved in spatial learning by regulating hippocampal CA1 neuronal excitability. Acts as a synaptic organizer in the hippocampus, required for proper mossy fiber-CA3 neurocircuitry establishment, structure and function: induces presynaptic differentiation in contacting axons via its interaction with GPC4. In addition to glycine, may also act as a receptor for osteocalcin (BGLAP) hormone: osteocalcin-binding initiates a signaling response that prevents neuronal apoptosis in the hippocampus and regulates the synthesis of neurotransmitters. The sequence is that of Metabotropic glycine receptor (GPR158) from Bos taurus (Bovine).